The primary structure comprises 473 residues: Phosphatidylserine synthase 1 (473 aa).

Ala-2 bears the N-acetylalanine mark. The Cytoplasmic portion of the chain corresponds to 2 to 35; that stretch reads ASCVGSRTLSKDDVNYRMHFRMINEQQVEDITID. The chain crosses the membrane as a helical span at residues 36 to 56; sequence FFYRPHTITLLSFTIISLMYF. Over 57–72 the chain is Lumenal; the sequence is AFTRDDCVPEDNIWRG. Residues 73 to 93 form a helical membrane-spanning segment; the sequence is ILSVIFFFLIISVLAFPNGPF. Residues 94–102 are Cytoplasmic-facing; that stretch reads TRPHPALWR. Residues 103-123 form a helical membrane-spanning segment; sequence MVFGLSVLYFLFLVFLLFLNF. Topologically, residues 124–186 are lumenal; the sequence is EQVKSLMYWL…AMKALLIRSY (63 aa). The chain crosses the membrane as a helical span at residues 187-207; that stretch reads GLCWTISITWELTELFFMHLL. Residues 208 to 216 lie on the Cytoplasmic side of the membrane; that stretch reads PNFAECWWD. The chain crosses the membrane as a helical span at residues 217 to 237; the sequence is QVILDILLCNGGGIWLGMVVC. Over 238–286 the chain is Lumenal; it reads RFLEMRTYHWASFKDIHTTTGKIKRAVLQFTPASWTYVRWFDPKSSFQR. The chain crosses the membrane as a helical span at residues 287-307; sequence VAGIYLFMIIWQLTELNTFFL. Topologically, residues 308–319 are cytoplasmic; it reads KHIFVFQASHPL. Residues 320–342 traverse the membrane as a helical segment; that stretch reads SWCRILFIGCITAPTVRQYYAYL. Topologically, residues 343 to 355 are lumenal; the sequence is TDTQCKRVGTQCW. A helical membrane pass occupies residues 356–376; sequence VFGVIGFLEAIVCIKFGQDLF. Over 377-383 the chain is Cytoplasmic; that stretch reads SKTQILY. Residues 384–404 traverse the membrane as a helical segment; the sequence is VVLWLLCVAFTTFLCLYGMVW. Residues 405 to 473 lie on the Lumenal side of the membrane; the sequence is YAEHYGHREK…SKVTNGVGKK (69 aa). Residues Ser-417, Ser-425, Ser-442, and Ser-454 each carry the phosphoserine modification. The segment at 430-473 is disordered; that stretch reads WYHGKGSKGSEDSPPKHSNNNESHSSRRRNRHSKSKVTNGVGKK. Over residues 455-464 the composition is skewed to basic residues; it reads SRRRNRHSKS.

This sequence belongs to the phosphatidyl serine synthase family.

It localises to the endoplasmic reticulum membrane. It catalyses the reaction a 1,2-diacyl-sn-glycero-3-phosphoethanolamine + L-serine = a 1,2-diacyl-sn-glycero-3-phospho-L-serine + ethanolamine. The catalysed reaction is a 1,2-diacyl-sn-glycero-3-phosphocholine + L-serine = a 1,2-diacyl-sn-glycero-3-phospho-L-serine + choline. It participates in phospholipid metabolism; phosphatidylserine biosynthesis. Catalyzes a base-exchange reaction in which the polar head group of phosphatidylethanolamine (PE) or phosphatidylcholine (PC) is replaced by L-serine. Catalyzes mainly the conversion of phosphatidylcholine but also converts, in vitro and to a lesser extent, phosphatidylethanolamine. The protein is Phosphatidylserine synthase 1 (Ptdss1) of Rattus norvegicus (Rat).